Consider the following 443-residue polypeptide: MREIVHIQGGQCGNQIGAKFWEVMSDEHGVDPTGTYHGDSDLQLERINVYFNEATGGRYVPRAILMDLEPGTMDSVRAGPFGQLFRPDNFVFGQTGAGNNWAKGHYTEGAELIDSVLDVVRKEAESCDCMQGFQLTHSMGGGTGAGMGTLLISKIREEYPDRVMSTYSVIPSPKVSDTVVEPYNATLSVHQLVENADQCFALDNEALYDICFRTLKLTTPTYGDLNHLIAAAVCGTTCCLRFPGQLNCDLRKLAVNMVPFPRLHFFMVGYAPLTSRGSQQYRALTVPELTQQCFDAKNMMCAADPRHGRYLTCAVLFRGRMSSKEVDEQMLNVVNKSSSYFVEWIPNNVKASICDIPPKGLKMATTFVGNTTAVQETWKRVAEQFTVMFRRKAFLHWYTGEGMDEMEFTEAESNMNDLVSEYQQYQDATADEEGEFDEDEMEG.

GTP-binding residues include Gln11, Glu69, Ser138, Gly142, Thr143, Gly144, Asn204, and Asn226. Glu69 is a Mg(2+) binding site.

This sequence belongs to the tubulin family. Dimer of alpha and beta chains. A typical microtubule is a hollow water-filled tube with an outer diameter of 25 nm and an inner diameter of 15 nM. Alpha-beta heterodimers associate head-to-tail to form protofilaments running lengthwise along the microtubule wall with the beta-tubulin subunit facing the microtubule plus end conferring a structural polarity. Microtubules usually have 13 protofilaments but different protofilament numbers can be found in some organisms and specialized cells. It depends on Mg(2+) as a cofactor.

The protein resides in the cytoplasm. Its subcellular location is the cytoskeleton. Tubulin is the major constituent of microtubules, a cylinder consisting of laterally associated linear protofilaments composed of alpha- and beta-tubulin heterodimers. Microtubules grow by the addition of GTP-tubulin dimers to the microtubule end, where a stabilizing cap forms. Below the cap, tubulin dimers are in GDP-bound state, owing to GTPase activity of alpha-tubulin. In Thalassiosira weissflogii (Marine diatom), this protein is Tubulin beta chain.